A 749-amino-acid polypeptide reads, in one-letter code: Ribosomal RNA large subunit methyltransferase K/L (749 aa).

A THUMP domain is found at 43 to 154 (QGYKVCLWSR…KDKATIYLDL (112 aa)). The tract at residues 386-406 (VEPVAPKKTNKETPEPINPWT) is disordered.

It belongs to the methyltransferase superfamily. RlmKL family.

It is found in the cytoplasm. The catalysed reaction is guanosine(2445) in 23S rRNA + S-adenosyl-L-methionine = N(2)-methylguanosine(2445) in 23S rRNA + S-adenosyl-L-homocysteine + H(+). It carries out the reaction guanosine(2069) in 23S rRNA + S-adenosyl-L-methionine = N(2)-methylguanosine(2069) in 23S rRNA + S-adenosyl-L-homocysteine + H(+). In terms of biological role, specifically methylates the guanine in position 2445 (m2G2445) and the guanine in position 2069 (m7G2069) of 23S rRNA. The protein is Ribosomal RNA large subunit methyltransferase K/L of Psychromonas ingrahamii (strain DSM 17664 / CCUG 51855 / 37).